The primary structure comprises 229 residues: Urease accessory protein UreG (229 aa).

Basic and acidic residues predominate over residues 1-15; it reads MPPHFIDGEPHDHQH. The segment at 1 to 20 is disordered; that stretch reads MPPHFIDGEPHDHQHDRPRR. Residue 34-41 participates in GTP binding; that stretch reads GPVGSGKT.

It belongs to the SIMIBI class G3E GTPase family. UreG subfamily. Homodimer. UreD, UreF and UreG form a complex that acts as a GTP-hydrolysis-dependent molecular chaperone, activating the urease apoprotein by helping to assemble the nickel containing metallocenter of UreC. The UreE protein probably delivers the nickel.

Its subcellular location is the cytoplasm. In terms of biological role, facilitates the functional incorporation of the urease nickel metallocenter. This process requires GTP hydrolysis, probably effectuated by UreG. The sequence is that of Urease accessory protein UreG from Rhodococcus jostii (strain RHA1).